The chain runs to 179 residues: Transcription factor E (179 aa).

The HTH TFE/IIEalpha-type domain maps to 1-102 (MAKKKVKYTF…YWRFDSRKAA (102 aa)).

Belongs to the TFE family. As to quaternary structure, monomer. Interaction with RNA polymerase subunits RpoF and RpoE is necessary for Tfe stimulatory transcription activity. Able to interact with Tbp and RNA polymerase in the absence of DNA promoter. Interacts both with the preinitiation and elongation complexes.

In terms of biological role, transcription factor that plays a role in the activation of archaeal genes transcribed by RNA polymerase. Facilitates transcription initiation by enhancing TATA-box recognition by TATA-box-binding protein (Tbp), and transcription factor B (Tfb) and RNA polymerase recruitment. Not absolutely required for transcription in vitro, but particularly important in cases where Tbp or Tfb function is not optimal. It dynamically alters the nucleic acid-binding properties of RNA polymerases by stabilizing the initiation complex and destabilizing elongation complexes. Seems to translocate with the RNA polymerase following initiation and acts by binding to the non template strand of the transcription bubble in elongation complexes. The protein is Transcription factor E of Methanosphaera stadtmanae (strain ATCC 43021 / DSM 3091 / JCM 11832 / MCB-3).